The chain runs to 660 residues: UvrABC system protein C (660 aa).

The 80-residue stretch at E16 to V95 folds into the GIY-YIG domain. A UVR domain is found at D208–A243. The disordered stretch occupies residues G469–T501. Positions A476–D486 are enriched in low complexity.

This sequence belongs to the UvrC family. As to quaternary structure, interacts with UvrB in an incision complex.

The protein localises to the cytoplasm. Functionally, the UvrABC repair system catalyzes the recognition and processing of DNA lesions. UvrC both incises the 5' and 3' sides of the lesion. The N-terminal half is responsible for the 3' incision and the C-terminal half is responsible for the 5' incision. The chain is UvrABC system protein C from Salinispora arenicola (strain CNS-205).